A 217-amino-acid polypeptide reads, in one-letter code: GrpE protein homolog 1, mitochondrial (217 aa).

The N-terminal 27 residues, 1 to 27 (MAAQCVRLARRSLPALALSLRPSPRLL), are a transit peptide targeting the mitochondrion. A disordered region spans residues 29–56 (TATKQKNSGQNLEEDMGQSEQKADPPAT). Residues 30–39 (ATKQKNSGQN) are compositionally biased toward polar residues. Lysine 94 bears the N6-acetyllysine; alternate mark. N6-succinyllysine; alternate is present on lysine 94. N6-acetyllysine is present on lysine 100. The residue at position 120 (lysine 120) is an N6-succinyllysine. An N6-acetyllysine; alternate modification is found at lysine 215. N6-succinyllysine; alternate is present on lysine 215.

It belongs to the GrpE family. As to quaternary structure, probable component of the PAM complex at least composed of a mitochondrial HSP70 protein, GRPEL1 or GRPEL2, TIMM44, TIMM16/PAM16 and TIMM14/DNAJC19. Binds to HSP70, HSC70 and HSJ1B.

The protein resides in the mitochondrion matrix. In terms of biological role, essential component of the PAM complex, a complex required for the translocation of transit peptide-containing proteins from the inner membrane into the mitochondrial matrix in an ATP-dependent manner. Seems to control the nucleotide-dependent binding of mitochondrial HSP70 to substrate proteins. The sequence is that of GrpE protein homolog 1, mitochondrial (GRPEL1) from Homo sapiens (Human).